We begin with the raw amino-acid sequence, 92 residues long: Defensin-like protein 96 (92 aa).

An N-terminal signal peptide occupies residues 1–29 (MGSLRLSTVAIAVVVCLSILLISPTEVDG). Disulfide bonds link cysteine 33–cysteine 80, cysteine 40–cysteine 65, cysteine 49–cysteine 77, and cysteine 53–cysteine 79.

The protein belongs to the DEFL family.

The protein resides in the secreted. This Arabidopsis thaliana (Mouse-ear cress) protein is Defensin-like protein 96.